The following is a 269-amino-acid chain: 4-hydroxy-tetrahydrodipicolinate reductase (269 aa).

Residues 8–13 (GASGRM), E34, 98–100 (GTT), and 122–125 (APNM) contribute to the NAD(+) site. H155 (proton donor/acceptor) is an active-site residue. H156 is a binding site for (S)-2,3,4,5-tetrahydrodipicolinate. Catalysis depends on K159, which acts as the Proton donor. 165 to 166 (GT) is a (S)-2,3,4,5-tetrahydrodipicolinate binding site.

It belongs to the DapB family.

Its subcellular location is the cytoplasm. The enzyme catalyses (S)-2,3,4,5-tetrahydrodipicolinate + NAD(+) + H2O = (2S,4S)-4-hydroxy-2,3,4,5-tetrahydrodipicolinate + NADH + H(+). It carries out the reaction (S)-2,3,4,5-tetrahydrodipicolinate + NADP(+) + H2O = (2S,4S)-4-hydroxy-2,3,4,5-tetrahydrodipicolinate + NADPH + H(+). It functions in the pathway amino-acid biosynthesis; L-lysine biosynthesis via DAP pathway; (S)-tetrahydrodipicolinate from L-aspartate: step 4/4. Catalyzes the conversion of 4-hydroxy-tetrahydrodipicolinate (HTPA) to tetrahydrodipicolinate. This Desulfotalea psychrophila (strain LSv54 / DSM 12343) protein is 4-hydroxy-tetrahydrodipicolinate reductase.